The sequence spans 785 residues: Cadherin-7 (785 aa).

Residues 1–27 (MKLGKVELCRFLQLIALFLCFSGMNQA) form the signal peptide. Residues 28–47 (ELPRSRSKPYFQLGRSRTKR) constitute a propeptide that is removed on maturation. Topologically, residues 28–607 (ELPRSRSKPY…AYILPAGLST (580 aa)) are extracellular. Cadherin domains lie at 49 to 153 (WVWN…EPKF), 154 to 262 (LDGP…PPRF), 263 to 377 (PRRS…PPVF), 378 to 482 (SSPL…APEF), and 482 to 599 (FAMD…AEAY). N-linked (GlcNAc...) asparagine glycosylation is found at asparagine 449 and asparagine 530. The helical transmembrane segment at 608 to 628 (GALIAILACVLTLLVLILLIV) threads the bilayer. The Cytoplasmic segment spans residues 629-785 (TMKRRKKEPL…YGNGQESLYS (157 aa)).

The protein localises to the cell membrane. In terms of biological role, cadherins are calcium-dependent cell adhesion proteins. They preferentially interact with themselves in a homophilic manner in connecting cells; cadherins may thus contribute to the sorting of heterogeneous cell types. This Rattus norvegicus (Rat) protein is Cadherin-7 (Cdh7).